Consider the following 333-residue polypeptide: Holliday junction branch migration complex subunit RuvB (333 aa).

The interval 1–182 (MDERLLSGES…FGVLSRLEYY (182 aa)) is large ATPase domain (RuvB-L). ATP contacts are provided by residues Leu21, Arg22, Gly63, Lys66, Thr67, Thr68, 129–131 (EDF), Arg172, Tyr182, and Arg219. Thr67 serves as a coordination point for Mg(2+). The interval 183-253 (TVDQLSAIVE…ITQMALELLQ (71 aa)) is small ATPAse domain (RuvB-S). Residues 256–333 (KLGLDHIDHK…EHFGMEIPKV (78 aa)) are head domain (RuvB-H). The DNA site is built by Arg311 and Arg316.

It belongs to the RuvB family. In terms of assembly, homohexamer. Forms an RuvA(8)-RuvB(12)-Holliday junction (HJ) complex. HJ DNA is sandwiched between 2 RuvA tetramers; dsDNA enters through RuvA and exits via RuvB. An RuvB hexamer assembles on each DNA strand where it exits the tetramer. Each RuvB hexamer is contacted by two RuvA subunits (via domain III) on 2 adjacent RuvB subunits; this complex drives branch migration. In the full resolvosome a probable DNA-RuvA(4)-RuvB(12)-RuvC(2) complex forms which resolves the HJ.

Its subcellular location is the cytoplasm. The enzyme catalyses ATP + H2O = ADP + phosphate + H(+). Its function is as follows. The RuvA-RuvB-RuvC complex processes Holliday junction (HJ) DNA during genetic recombination and DNA repair, while the RuvA-RuvB complex plays an important role in the rescue of blocked DNA replication forks via replication fork reversal (RFR). RuvA specifically binds to HJ cruciform DNA, conferring on it an open structure. The RuvB hexamer acts as an ATP-dependent pump, pulling dsDNA into and through the RuvAB complex. RuvB forms 2 homohexamers on either side of HJ DNA bound by 1 or 2 RuvA tetramers; 4 subunits per hexamer contact DNA at a time. Coordinated motions by a converter formed by DNA-disengaged RuvB subunits stimulates ATP hydrolysis and nucleotide exchange. Immobilization of the converter enables RuvB to convert the ATP-contained energy into a lever motion, pulling 2 nucleotides of DNA out of the RuvA tetramer per ATP hydrolyzed, thus driving DNA branch migration. The RuvB motors rotate together with the DNA substrate, which together with the progressing nucleotide cycle form the mechanistic basis for DNA recombination by continuous HJ branch migration. Branch migration allows RuvC to scan DNA until it finds its consensus sequence, where it cleaves and resolves cruciform DNA. This chain is Holliday junction branch migration complex subunit RuvB, found in Bacillus cereus (strain G9842).